A 319-amino-acid chain; its full sequence is Putative olfactory receptor 52L2 (319 aa).

Residues 1-43 are Extracellular-facing; it reads MNLDSFFSFLLKSLIMALSNSSWRLPQPSFFLVGIPGLEESQH. Residue N20 is glycosylated (N-linked (GlcNAc...) asparagine). The chain crosses the membrane as a helical span at residues 44-64; that stretch reads WIALPLGILYLLALVGNVTIL. At 65–72 the chain is on the cytoplasmic side; the sequence is FIIWMDPS. The helical transmembrane segment at 73 to 93 threads the bilayer; the sequence is LHQSMYLFLSMLAAIDLVVAS. The Extracellular segment spans residues 94 to 117; the sequence is STAPKALAVLLVRAQEIGYTVCLI. Residues C115 and C207 are joined by a disulfide bond. The chain crosses the membrane as a helical span at residues 118-138; sequence QMFFTHAFSSMESGVLVAMAL. Over 139–157 the chain is Cytoplasmic; that stretch reads DRYVAICHPLHHSTILHPG. A helical transmembrane segment spans residues 158–178; the sequence is VIGHIGMVVLVRGLLLLIPFL. Residues 179-214 lie on the Extracellular side of the membrane; that stretch reads ILLRKLIFCQATIIGHAYCEHMAVVKLACSETTVNR. The chain crosses the membrane as a helical span at residues 215-235; sequence AYGLTVALLVVGLDVLAIGVS. The Cytoplasmic segment spans residues 236–255; it reads YAHILQAVLKVPGNEARLKA. A helical transmembrane segment spans residues 256–276; the sequence is FSTCGSHVCVILVFYIPGMFS. At 277-291 the chain is on the extracellular side; the sequence is FLTHRFGHHVPHHVH. A helical membrane pass occupies residues 292 to 312; sequence VLLAILYRLVPPALNPLVYRV. Topologically, residues 313-319 are cytoplasmic; the sequence is KTQKIHQ.

Belongs to the G-protein coupled receptor 1 family.

Its subcellular location is the cell membrane. In terms of biological role, odorant receptor. This is Putative olfactory receptor 52L2 (OR52L2P) from Homo sapiens (Human).